A 154-amino-acid polypeptide reads, in one-letter code: Myoglobin (154 aa).

Residues 2–148 (GLSDGEWQLV…FRNDIAAKYK (147 aa)) form the Globin domain. Ser-4 carries the post-translational modification Phosphoserine. His-65 serves as a coordination point for nitrite. An O2-binding site is contributed by His-65. Thr-68 carries the phosphothreonine modification. His-94 is a heme b binding site.

This sequence belongs to the globin family. In terms of assembly, monomeric.

It is found in the cytoplasm. It localises to the sarcoplasm. It catalyses the reaction Fe(III)-heme b-[protein] + nitric oxide + H2O = Fe(II)-heme b-[protein] + nitrite + 2 H(+). The catalysed reaction is H2O2 + AH2 = A + 2 H2O. In terms of biological role, monomeric heme protein which primary function is to store oxygen and facilitate its diffusion within muscle tissues. Reversibly binds oxygen through a pentacoordinated heme iron and enables its timely and efficient release as needed during periods of heightened demand. Depending on the oxidative conditions of tissues and cells, and in addition to its ability to bind oxygen, it also has a nitrite reductase activity whereby it regulates the production of bioactive nitric oxide. Under stress conditions, like hypoxia and anoxia, it also protects cells against reactive oxygen species thanks to its pseudoperoxidase activity. The polypeptide is Myoglobin (MB) (Lepilemur mustelinus (Weasel sportive lemur)).